Consider the following 172-residue polypeptide: Low molecular mass early light-inducible protein HV90, chloroplastic (172 aa).

The transit peptide at 1–38 (MATMMSMSSFAGAAVVPRSSASSFGARSLPALGRRALV) directs the protein to the chloroplast. A run of 2 helical transmembrane segments spans residues 106-126 (GQAWFAYTVAVLSMASLVPLL) and 150-170 (FAMLGLVALAATEIITGAPFI).

Belongs to the ELIP/psbS family.

Its subcellular location is the plastid. It is found in the chloroplast membrane. Its function is as follows. Probably involved in the integration of pigments into the mature pigment-protein complexes. In Hordeum vulgare (Barley), this protein is Low molecular mass early light-inducible protein HV90, chloroplastic.